The chain runs to 202 residues: Endoribonuclease YbeY (202 aa).

Residues H120, H124, and H130 each contribute to the Zn(2+) site.

It belongs to the endoribonuclease YbeY family. Requires Zn(2+) as cofactor.

The protein localises to the cytoplasm. Functionally, single strand-specific metallo-endoribonuclease involved in late-stage 70S ribosome quality control and in maturation of the 3' terminus of the 16S rRNA. The protein is Endoribonuclease YbeY of Corynebacterium kroppenstedtii (strain DSM 44385 / JCM 11950 / CIP 105744 / CCUG 35717).